Reading from the N-terminus, the 349-residue chain is Nucleoporin SEH1 (349 aa).

5 WD repeats span residues 7–46 (GHDDLVHDVVYDFYGRHVATCSSDQHIKVFKLDKDTSNWE), 53–94 (AHDS…EECS), 106–147 (DSKG…DLRS), 153–192 (EMKVLSIPPANHLQSDFCLSWCPSRFSPEKLAVSALEQAI), and 210–253 (GHKS…SPLA). Serine 257 is subject to Phosphoserine. The tract at residues 263 to 285 (MFDNSADVDMDAQGRSDSNTEEK) is disordered. Residues 274-285 (AQGRSDSNTEEK) are compositionally biased toward basic and acidic residues. One copy of the WD 6 repeat lies at 302 to 341 (DHNGEVWSVSWNLTGTILSSAGDDGKVRLWKATYSNEFKC).

This sequence belongs to the WD repeat SEC13 family. As to quaternary structure, component of the nuclear pore complex (NPC). NPC constitutes the exclusive means of nucleocytoplasmic transport. NPCs allow the passive diffusion of ions and small molecules and the active, nuclear transport receptor-mediated bidirectional transport of macromolecules such as proteins, RNAs, ribonucleoparticles (RNPs), and ribosomal subunits across the nuclear envelope. Due to its 8-fold rotational symmetry, all subunits are present with 8 copies or multiples thereof. SEH1 is part of the heptameric 0.5 MDa autoassembling NUP84 NPC subcomplex (NUP84, NUP85, NUP120, NUP133, NUP145C, SEC13 and SEH1). Component of the SEA complex composed of at least IML1/SEA1, RTC1/SEA2, MTC5/SEA3, NPR2, NPR3, SEA4, SEC13 and SEH1.

It is found in the nucleus. It localises to the nuclear pore complex. The protein resides in the nucleus membrane. Its subcellular location is the vacuole membrane. Functions as a component of the nuclear pore complex (NPC). NPC components, collectively referred to as nucleoporins (NUPs), can play the role of both NPC structural components and of docking or interaction partners for transiently associated nuclear transport factors. Involved in nuclear poly(A)+ RNA export and NPC biogenesis. It is also required for normal nuclear morphology. Component of the SEA complex which coats the vacuolar membrane and is involved in intracellular trafficking, autophagy, response to nitrogen starvation, and amino acid biogenesis. This chain is Nucleoporin SEH1 (SEH1), found in Saccharomyces cerevisiae (strain ATCC 204508 / S288c) (Baker's yeast).